Reading from the N-terminus, the 363-residue chain is tRNA-specific 2-thiouridylase MnmA (363 aa).

Residues 8 to 15 (AMSGGVDS) and Leu34 each bind ATP. Cys103 serves as the catalytic Nucleophile. A disulfide bridge connects residues Cys103 and Cys195. Gly127 serves as a coordination point for ATP. An interaction with tRNA region spans residues 145 to 147 (KDQ). Residue Cys195 is the Cysteine persulfide intermediate of the active site.

It belongs to the MnmA/TRMU family.

The protein localises to the cytoplasm. It catalyses the reaction S-sulfanyl-L-cysteinyl-[protein] + uridine(34) in tRNA + AH2 + ATP = 2-thiouridine(34) in tRNA + L-cysteinyl-[protein] + A + AMP + diphosphate + H(+). In terms of biological role, catalyzes the 2-thiolation of uridine at the wobble position (U34) of tRNA, leading to the formation of s(2)U34. The chain is tRNA-specific 2-thiouridylase MnmA from Thermobifida fusca (strain YX).